The following is a 186-amino-acid chain: Photosystem I assembly protein Ycf4 (186 aa).

A run of 2 helical transmembrane segments spans residues 26-46 (WATI…SSYF) and 66-86 (IVMT…WLTI).

The protein belongs to the Ycf4 family.

Its subcellular location is the plastid. It is found in the chloroplast thylakoid membrane. Seems to be required for the assembly of the photosystem I complex. The chain is Photosystem I assembly protein Ycf4 from Pyropia yezoensis (Susabi-nori).